Reading from the N-terminus, the 211-residue chain is Uracil phosphoribosyltransferase (211 aa).

5-phospho-alpha-D-ribose 1-diphosphate is bound by residues R77, R102, and D129 to S137. Residues I192 and G197–A199 contribute to the uracil site. D198 is a binding site for 5-phospho-alpha-D-ribose 1-diphosphate.

Belongs to the UPRTase family. Mg(2+) serves as cofactor.

It catalyses the reaction UMP + diphosphate = 5-phospho-alpha-D-ribose 1-diphosphate + uracil. It participates in pyrimidine metabolism; UMP biosynthesis via salvage pathway; UMP from uracil: step 1/1. Allosterically activated by GTP. Catalyzes the conversion of uracil and 5-phospho-alpha-D-ribose 1-diphosphate (PRPP) to UMP and diphosphate. The polypeptide is Uracil phosphoribosyltransferase (Corynebacterium aurimucosum (strain ATCC 700975 / DSM 44827 / CIP 107346 / CN-1) (Corynebacterium nigricans)).